The sequence spans 134 residues: Large ribosomal subunit protein uL22 (134 aa).

The protein belongs to the universal ribosomal protein uL22 family. As to quaternary structure, part of the 50S ribosomal subunit.

Functionally, this protein binds specifically to 23S rRNA; its binding is stimulated by other ribosomal proteins, e.g. L4, L17, and L20. It is important during the early stages of 50S assembly. It makes multiple contacts with different domains of the 23S rRNA in the assembled 50S subunit and ribosome. In terms of biological role, the globular domain of the protein is located near the polypeptide exit tunnel on the outside of the subunit, while an extended beta-hairpin is found that lines the wall of the exit tunnel in the center of the 70S ribosome. This is Large ribosomal subunit protein uL22 from Gluconacetobacter diazotrophicus (strain ATCC 49037 / DSM 5601 / CCUG 37298 / CIP 103539 / LMG 7603 / PAl5).